Reading from the N-terminus, the 186-residue chain is Elongation factor P (186 aa).

This sequence belongs to the elongation factor P family.

Its subcellular location is the cytoplasm. It participates in protein biosynthesis; polypeptide chain elongation. Its function is as follows. Involved in peptide bond synthesis. Stimulates efficient translation and peptide-bond synthesis on native or reconstituted 70S ribosomes in vitro. Probably functions indirectly by altering the affinity of the ribosome for aminoacyl-tRNA, thus increasing their reactivity as acceptors for peptidyl transferase. The polypeptide is Elongation factor P (Prochlorococcus marinus (strain MIT 9301)).